We begin with the raw amino-acid sequence, 204 residues long: Ribosomal RNA small subunit methyltransferase G (204 aa).

3 residues coordinate S-adenosyl-L-methionine: Gly73, Phe78, and Arg139.

It belongs to the methyltransferase superfamily. RNA methyltransferase RsmG family.

The protein resides in the cytoplasm. It catalyses the reaction guanosine(527) in 16S rRNA + S-adenosyl-L-methionine = N(7)-methylguanosine(527) in 16S rRNA + S-adenosyl-L-homocysteine. Functionally, specifically methylates the N7 position of guanine in position 527 of 16S rRNA. This is Ribosomal RNA small subunit methyltransferase G from Coxiella burnetii (strain CbuG_Q212) (Coxiella burnetii (strain Q212)).